A 657-amino-acid polypeptide reads, in one-letter code: MRLKQLTNLNTLLLLTVCLALGITLWWSQRAMERPFQLLDQYLELSQRFDEQVARNIRQYLGSGDAVRQQAALQALESLAEALPELPPDLARTLAPSLAELREFSAGDLLAAGKLAGDPQGLLLQAERDLTGNLEQWSAYLDAAAGQPQAGAYRTPLLLASLHLTRLSLARAKLVESANPALAGDVERELANLREQAGRIEALPLLGVLDEQRSASDDFAAMMGLAGDAEAGAGNAEDRGVALRRELASLLQRYPDELRRTRDLIERRQQLSADTGARLDAVRQALATLEPQVRGERQRLQGQVRLIQGGMIALILLIALAIDSLQRRLARVLGQLVPALSAWADGDFSRPISLRTRTEDLRNLEDSLNRLRSFLAELVGAIHRRAEQVAGSSQTLAEVSSGLHAGVERQAGDTGQIRDALGDMEAAIQQVAGDASQTADASRSAGQAVEHGQRVIGESLGGLRELVDEVQGNAQSIERLAEESATIGSVLTVIRSIAEQTNLLALNAAIEAARAGDQGRGFAVVAEEVRSLAQRTAGATEEIQQLIGRLQQAARQSVEAMRSQVEHAERTAEQAGAAEGALDEVVAAIHTIGVMAERIAEGSTQQSQAVGEIRSHSERIHALGGENLRLIGHSREQGEQLRQLGGDLRTTVQAFRL.

The Cytoplasmic portion of the chain corresponds to 1–5; sequence MRLKQ. The helical transmembrane segment at 6 to 26 threads the bilayer; it reads LTNLNTLLLLTVCLALGITLW. Residues 27–305 lie on the Periplasmic side of the membrane; it reads WSQRAMERPF…ERQRLQGQVR (279 aa). A helical transmembrane segment spans residues 306 to 326; it reads LIQGGMIALILLIALAIDSLQ. An HAMP domain is found at 327–380; that stretch reads RRLARVLGQLVPALSAWADGDFSRPISLRTRTEDLRNLEDSLNRLRSFLAELVG. At 327 to 657 the chain is on the cytoplasmic side; that stretch reads RRLARVLGQL…LRTTVQAFRL (331 aa). Residues 385–621 form the Methyl-accepting transducer domain; sequence RAEQVAGSSQ…EIRSHSERIH (237 aa).

Belongs to the methyl-accepting chemotaxis (MCP) protein family.

Its subcellular location is the cell inner membrane. Chemotactic-signal transducers respond to changes in the concentration of attractants and repellents in the environment, transduce a signal from the outside to the inside of the cell, and facilitate sensory adaptation through the variation of the level of methylation. Chemoreceptor for inorganic phosphate, which is required for taxis at low concentrations of phosphate. Is also responsible for the positive chemotaxis toward 4-chloroaniline (4CA) and catechol. Does not recognize inorganic phosphate directly, but via a complex between the periplasmic protein PstS and inorganic phosphate. The protein is Methyl-accepting chemotaxis protein CtpL of Pseudomonas aeruginosa (strain ATCC 15692 / DSM 22644 / CIP 104116 / JCM 14847 / LMG 12228 / 1C / PRS 101 / PAO1).